Here is a 257-residue protein sequence, read N- to C-terminus: Snake venom serine protease Haly-2 (257 aa).

Positions 1–18 (MVLIRVLANLLILQLSYA) are cleaved as a signal peptide. Positions 19-24 (QKSSEL) are excised as a propeptide. The region spanning 25–248 (IIGGDECNIN…HLEWIRSIIA (224 aa)) is the Peptidase S1 domain. 6 disulfide bridges follow: Cys31–Cys162, Cys49–Cys65, Cys97–Cys255, Cys141–Cys209, Cys173–Cys188, and Cys199–Cys224. His64 serves as the catalytic Charge relay system. Asn100 carries an N-linked (GlcNAc...) asparagine glycan. Asp109 acts as the Charge relay system in catalysis. Ser203 serves as the catalytic Charge relay system.

The protein belongs to the peptidase S1 family. Snake venom subfamily. As to quaternary structure, monomer. As to expression, expressed by the venom gland.

It is found in the secreted. Its function is as follows. Snake venom serine protease that may act in the hemostasis system of the prey. The protein is Snake venom serine protease Haly-2 of Gloydius brevicauda (Korean slamosa snake).